We begin with the raw amino-acid sequence, 152 residues long: D-aminoacyl-tRNA deacylase (152 aa).

The Gly-cisPro motif, important for rejection of L-amino acids signature appears at 142 to 143 (GP).

Belongs to the DTD family. Homodimer.

The protein localises to the cytoplasm. It carries out the reaction glycyl-tRNA(Ala) + H2O = tRNA(Ala) + glycine + H(+). The catalysed reaction is a D-aminoacyl-tRNA + H2O = a tRNA + a D-alpha-amino acid + H(+). Its function is as follows. An aminoacyl-tRNA editing enzyme that deacylates mischarged D-aminoacyl-tRNAs. Also deacylates mischarged glycyl-tRNA(Ala), protecting cells against glycine mischarging by AlaRS. Acts via tRNA-based rather than protein-based catalysis; rejects L-amino acids rather than detecting D-amino acids in the active site. By recycling D-aminoacyl-tRNA to D-amino acids and free tRNA molecules, this enzyme counteracts the toxicity associated with the formation of D-aminoacyl-tRNA entities in vivo and helps enforce protein L-homochirality. This chain is D-aminoacyl-tRNA deacylase, found in Burkholderia vietnamiensis (strain G4 / LMG 22486) (Burkholderia cepacia (strain R1808)).